Consider the following 1694-residue polypeptide: MTNLPIRFQEVLQLTNLGIGSNSIGFSTLTMESEKYICIRETTPDDKNNVVIIDTDNPSQILRKQMKTDAAIMNPKEPILALKIGQVLQLISIEQKMQLKSCQMQEPLEFWKWISPNTLALVTATSVFHWTKEGNSDPVKVFDRHPDLQNTEIINYRSDSTQNWLVLVAIHQRDGRVVGRIQLYSVEKQISQSIEGHAACFANYIVPGATRPSTLFAISSRTQNASKILVLEVSKGDGPNFQKRASDVFYPPEIGASDFPVAMQVSEKYEVIYMVTKLGYIHLFDLGTANLIYRNRISNENIFVTAFEESTNGIIAVNRKGQVLSVSIDDKNIIPYICNTLNNLELAISMACKNNLPGAEGLLTTQFERYFQQGQYKEAAKVAADSPGSILRNLQTIQKFQSIPPIPDQPSALLQYFGMLLEKGKLNKVESLELVRPVLAQGKKPILEKWLTEDKLECSEQLGDEVRPHDRKLALSIYYRANASDKVITLFAETGEFDKIIAYCKKFNYKPDFMFLLQRMANANPMGAADFAVKLVKEEGGPYIDANQVVELFSARNMIQETSNFLFAILDGDRPQDANLQTKLLEINLLHAPQNADAIMGGQKFTHYNRLRIGGLCEKAGLYQRALEHYTDLADIKRVLSHAGHMVNQEFLVSYFGSLNPEDRMECMRDFLRTNPRQNLQLVVAIAVSYSDQITPEAIIAMFESFRLYEGLYLYLTQVVVTSTSPEVHFKYIEAAAKINQFKEVERMCRDSNYYDPEKTRDFLKEAKLPDQLPLIIVCDRYEFISDLTNYLYKNNLSKYIEAYVQKINPVNTPLVVGALLDLDCQEDYLRNLIMSVRNMCPADSLVEQVEKRNRLKLLLPWLEARVAEGNIEPAIHNALAKIYIDSNKNPEAFLLHNQFYDSKVVGKYCEKRDPYLSFVAYKRGLCDYELIEVTNKNTLFKNQARYLVERQDPDLWAYVLSDQNEYKRSLIDQVVQTALPESTNATEVSATVKAFMDANLPNELIELLEKIVLEGKEFKTAKELQNLLILTAIRADKSRVTDYINRLDNFDGSKLAPIAIESQLYEEAFFMYKKFQFNVEAIDVLITHIGSIERAHDFAERCNQTEVYSKLGVAQLKAEMVKECIESFIKANDTEHYQEVVAAAERKDEYEDLVKFLQMCRKKIKEPAIESELIFAYAKVNKLAEMEDFINSPNSAHIQVVGDRCFENGLYEAAKVLYTNISNFSRLTSCLVKLGQYQAAVDAARKANSTKTWKEVSAACIDAKEFRLAQVCGINIIVHGDELEELIRQYEDRGYFNELISLLESGLASERAHVGMFTELAILYSKYKEEKLMEHLKLFYSRLNVPKVIKACQANQQWPQLTYLYIHYDEHDNAIQTMINHSIEAWDHVLFKETIPKVAKLDLYYSAISFYLEEQPLLINDLLSVLSPRIDHTRAVTLIRSLGHLPLVKPYLVSAQDQNVAALNEALNELYVEEEDYESLRSSIDANSNFGTIALAQKLEKHELLEFRRIAAYLYKKNNRWAQSVELSKKDKLYKDAIQSASDSKNPAIGEELLQYFVDQQNNSAFAACLYTCYDFLKPDAVIELAWRNNILNYSFPYLIQYVKEYTTKVDQLVDDFKARQKKTEEEKEQQNIESSQYQPDLTNLSYGYAATGGMLALPPAVGYQQQQQPQQMYNPNQMMGGFQQNYNQYGGF.

A globular terminal domain region spans residues 1–478 (MTNLPIRFQE…HDRKLALSIY (478 aa)). WD40-like repeat regions lie at residues 23–67 (SIGF…KQMK), 68–107 (TDAA…MQEP), 108–149 (LEFW…PDLQ), 150–195 (NTEI…QSIE), 196–256 (GHAA…EIGA), 257–300 (SDFP…ISNE), and 301–329 (NIFV…VSID). Residues 448 to 464 (EKWLTEDKLECSEQLGD) form a binding site for the uncoating ATPase, involved in lattice disassembly region. Residues 479–522 (YRANASDKVITLFAETGEFDKIIAYCKKFNYKPDFMFLLQRMAN) are flexible linker. Residues 523–1694 (ANPMGAADFA…QQNYNQYGGF (1172 aa)) are heavy chain arm. 7 CHCR repeats span residues 537–681 (KEEG…QNLQ), 687–829 (AVSY…QEDY), 834–973 (IMSV…SLID), 980–1125 (LPES…VKEC), 1129–1270 (FIKA…FRLA), 1275–1421 (INII…LLIN), and 1424–1567 (LSVL…NSAF). Residues 1214–1523 (AAKVLYTNIS…YLYKKNNRWA (310 aa)) are involved in binding clathrin light chain. The tract at residues 1551–1694 (GEELLQYFVD…QQNYNQYGGF (144 aa)) is trimerization. Residues 1610–1640 (KVDQLVDDFKARQKKTEEEKEQQNIESSQYQ) are a coiled coil.

Belongs to the clathrin heavy chain family. Clathrin coats are formed from molecules containing 3 heavy chains and 3 light chains.

It is found in the cytoplasmic vesicle membrane. The protein localises to the membrane. The protein resides in the coated pit. In terms of biological role, clathrin is the major protein of the polyhedral coat of coated pits and vesicles. This chain is Clathrin heavy chain (chcA), found in Dictyostelium discoideum (Social amoeba).